Here is a 289-residue protein sequence, read N- to C-terminus: G1/S-specific cyclin-D2 (289 aa).

Residues 26–151 form the Cyclin N-terminal domain; that stretch reads VLQNLLTIEE…VVLGKLKWNL (126 aa). Residues 264 to 289 form a disordered region; sequence DQGDGSKSEDELDQASTPTDVRDIDL. Position 271 is a phosphoserine (S271). A Phosphothreonine modification is found at T280.

It belongs to the cyclin family. Cyclin D subfamily. In terms of assembly, interacts with either CDK4 or CDK6 protein kinase to form a serine/threonine kinase holoenzyme complex. The cyclin subunit imparts substrate specificity to the complex. Post-translationally, phosphorylation at Thr-280 by MAP kinases is required for ubiquitination and degradation by the DCX(AMBRA1) complex. Ubiquitinated by the DCX(AMBRA1) complex during the transition from G1 to S cell phase, leading to its degradation: ubiquitination is dependent on Thr-280 phosphorylation. The DCX(AMBRA1) complex represents the major regulator of CCND2 stability during the G1/S transition. Polyubiquitinated by the SCF(FBXL2) complex, leading to proteasomal degradation.

It is found in the nucleus. Its subcellular location is the cytoplasm. The protein localises to the nucleus membrane. Regulatory component of the cyclin D2-CDK4 (DC) complex that phosphorylates and inhibits members of the retinoblastoma (RB) protein family including RB1 and regulates the cell-cycle during G(1)/S transition. Phosphorylation of RB1 allows dissociation of the transcription factor E2F from the RB/E2F complex and the subsequent transcription of E2F target genes which are responsible for the progression through the G(1) phase. Hypophosphorylates RB1 in early G(1) phase. Cyclin D-CDK4 complexes are major integrators of various mitogenenic and antimitogenic signals. The polypeptide is G1/S-specific cyclin-D2 (CCND2) (Bos taurus (Bovine)).